The sequence spans 105 residues: Membrane-stabilizing protein A (105 aa).

The chain crosses the membrane as a helical span at residues 1-21 (MQFYLILLAILYLIVSFISIF). The Cytoplasmic segment spans residues 22–29 (KMEVVFTR). A helical transmembrane segment spans residues 30–50 (ILRIIMGVLLLFVLALTTMSF). Residues 51–55 (PKENW) are Extracellular-facing. The helical transmembrane segment at 56–76 (WVFIVLLLLVGNVEVTGFKML) threads the bilayer. The Cytoplasmic segment spans residues 77-84 (KKDLKGVN). A helical transmembrane segment spans residues 85 to 105 (ILNLMSLFIFVIYFILTIVLF).

The protein belongs to the MspA family.

The protein resides in the membrane. Functionally, plays a role in toxin production, resistance to host innate immune mechanisms, and iron homeostasis. This chain is Membrane-stabilizing protein A, found in Staphylococcus aureus (strain NCTC 8325 / PS 47).